Here is a 381-residue protein sequence, read N- to C-terminus: Queuine tRNA-ribosyltransferase (381 aa).

The active-site Proton acceptor is the Asp-96. Residues 96–100, Asp-150, Gln-193, and Gly-220 each bind substrate; that span reads DSGGF. The interval 251 to 257 is RNA binding; the sequence is GVGSPDS. Asp-270 serves as the catalytic Nucleophile. The RNA binding; important for wobble base 34 recognition stretch occupies residues 275-279; it reads TRIAR. Residues Cys-308, Cys-310, Cys-313, and His-339 each coordinate Zn(2+).

The protein belongs to the queuine tRNA-ribosyltransferase family. Homodimer. Within each dimer, one monomer is responsible for RNA recognition and catalysis, while the other monomer binds to the replacement base PreQ1. Zn(2+) serves as cofactor.

The catalysed reaction is 7-aminomethyl-7-carbaguanine + guanosine(34) in tRNA = 7-aminomethyl-7-carbaguanosine(34) in tRNA + guanine. The protein operates within tRNA modification; tRNA-queuosine biosynthesis. In terms of biological role, catalyzes the base-exchange of a guanine (G) residue with the queuine precursor 7-aminomethyl-7-deazaguanine (PreQ1) at position 34 (anticodon wobble position) in tRNAs with GU(N) anticodons (tRNA-Asp, -Asn, -His and -Tyr). Catalysis occurs through a double-displacement mechanism. The nucleophile active site attacks the C1' of nucleotide 34 to detach the guanine base from the RNA, forming a covalent enzyme-RNA intermediate. The proton acceptor active site deprotonates the incoming PreQ1, allowing a nucleophilic attack on the C1' of the ribose to form the product. After dissociation, two additional enzymatic reactions on the tRNA convert PreQ1 to queuine (Q), resulting in the hypermodified nucleoside queuosine (7-(((4,5-cis-dihydroxy-2-cyclopenten-1-yl)amino)methyl)-7-deazaguanosine). In Bacillus licheniformis (strain ATCC 14580 / DSM 13 / JCM 2505 / CCUG 7422 / NBRC 12200 / NCIMB 9375 / NCTC 10341 / NRRL NRS-1264 / Gibson 46), this protein is Queuine tRNA-ribosyltransferase.